A 129-amino-acid chain; its full sequence is MARRQVRTKRKDKKNVEQGVAHIKSTFNNTIVTITDLKGNTLGWSSAGQVGFKGSRKSTPFAAQMAAEAAAKDAMEHGLKEVEVTVKGPGSGREAAIRSLQAAGLEVNMIKDVTPIPHNGCRPPKRRRV.

This sequence belongs to the universal ribosomal protein uS11 family. As to quaternary structure, part of the 30S ribosomal subunit. Interacts with proteins S7 and S18. Binds to IF-3.

Functionally, located on the platform of the 30S subunit, it bridges several disparate RNA helices of the 16S rRNA. Forms part of the Shine-Dalgarno cleft in the 70S ribosome. The protein is Small ribosomal subunit protein uS11 of Desulforamulus reducens (strain ATCC BAA-1160 / DSM 100696 / MI-1) (Desulfotomaculum reducens).